The sequence spans 124 residues: Small ribosomal subunit protein eS6 (124 aa).

This sequence belongs to the eukaryotic ribosomal protein eS6 family.

This is Small ribosomal subunit protein eS6 from Methanococcus maripaludis (strain C5 / ATCC BAA-1333).